The primary structure comprises 330 residues: MDKTATLCLLFLFTFLTTCLSKDLCNQNDKNTLLKIKKSLNNPYHLASWDPQTDCCSWYCLECGDATVNHRVTALTIFSGQISGQIPAEVGDLPYLETLVFRKLSNLTGTIQPTIAKLKNLRMLRLSWTNLTGPIPDFISQLKNLEFLELSFNDLSGSIPSSLSTLPKILALELSRNKLTGSIPESFGSFPGTVPDLRLSHNQLSGPIPKSLGNIDFNRIDLSRNKLQGDASMLFGSNKTTWSIDLSRNMFQFDISKVDIPKTLGILDLNHNGITGNIPVQWTEAPLQFFNVSYNKLCGHIPTGGKLQTFDSYSYFHNKCLCGAPLEICK.

The first 21 residues, 1 to 21 (MDKTATLCLLFLFTFLTTCLS), serve as a signal peptide directing secretion. Cystine bridges form between cysteine 25–cysteine 55 and cysteine 56–cysteine 63. LRR repeat units follow at residues 69-93 (NHRVTALTIFSGQISGQIPAEVGDL), 94-117 (PYLETLVFRKLSNLTGTIQPTIAK), 118-142 (LKNLRMLRLSWTNLTGPIPDFISQL), 143-166 (KNLEFLELSFNDLSGSIPSSLSTL), 167-189 (PKILALELSRNKLTGSIPESFGS), 191-215 (PGTVPDLRLSHNQLSGPIPKSLGNI), 217-237 (FNRIDLSRNKLQGDASMLFGS), 238-260 (NKTTWSIDLSRNMFQFDISKVDI), 261-285 (PKTLGILDLNHNGITGNIPVQWTEA), and 287-309 (LQFFNVSYNKLCGHIPTGGKLQT). Asparagine 106 and asparagine 130 each carry an N-linked (GlcNAc...) asparagine glycan. Residue asparagine 238 is glycosylated (N-linked (GlcNAc...) asparagine). The N-linked (GlcNAc...) asparagine glycan is linked to asparagine 291. 2 disulfide bridges follow: cysteine 298/cysteine 320 and cysteine 322/cysteine 329.

It belongs to the polygalacturonase-inhibiting protein family.

The protein localises to the secreted. The protein resides in the cell wall. It localises to the membrane. Functionally, inhibitor of fungal polygalacturonase. It is an important factor for plant resistance to phytopathogenic fungi. This chain is Polygalacturonase inhibitor 1 (PGIP1), found in Arabidopsis thaliana (Mouse-ear cress).